Reading from the N-terminus, the 199-residue chain is Melanocortin-2 receptor accessory protein 2B (199 aa).

Asn-6 carries an N-linked (GlcNAc...) asparagine glycan. The chain crosses the membrane as a helical span at residues 39–59 (IVIGFWVGLAVFVIFMFFVLT).

This sequence belongs to the MRAP family. Interacts with mc4r. In terms of tissue distribution, expressed in adult brain.

It is found in the cell membrane. The protein resides in the endoplasmic reticulum membrane. Activator of melanocortin receptor 4 (mc4r), a receptor involved in energy homeostasis. Plays a role after larval development in the control of energy homeostasis and body weight regulation by increasing ligand-sensitivity of mc4r and mc4r-mediated generation of cAMP once the zebrafish begins feeding, increasing the capacity for regulated feeding and growth. The sequence is that of Melanocortin-2 receptor accessory protein 2B (mrap2b) from Danio rerio (Zebrafish).